A 258-amino-acid chain; its full sequence is Tryptophan synthase alpha chain (258 aa).

Catalysis depends on proton acceptor residues Glu47 and Asp58.

Belongs to the TrpA family. In terms of assembly, tetramer of two alpha and two beta chains.

The enzyme catalyses (1S,2R)-1-C-(indol-3-yl)glycerol 3-phosphate + L-serine = D-glyceraldehyde 3-phosphate + L-tryptophan + H2O. The protein operates within amino-acid biosynthesis; L-tryptophan biosynthesis; L-tryptophan from chorismate: step 5/5. The alpha subunit is responsible for the aldol cleavage of indoleglycerol phosphate to indole and glyceraldehyde 3-phosphate. The chain is Tryptophan synthase alpha chain from Bacillus thuringiensis (strain Al Hakam).